The primary structure comprises 358 residues: 3-isopropylmalate dehydrogenase (358 aa).

77-90 (GEKWDSLPRELRPE) contributes to the NAD(+) binding site. Residues arginine 97, arginine 107, arginine 135, and aspartate 220 each contribute to the substrate site. Positions 220, 244, and 248 each coordinate Mg(2+). Position 277–289 (277–289 (GSAPDIAGQGIAN)) interacts with NAD(+).

This sequence belongs to the isocitrate and isopropylmalate dehydrogenases family. LeuB type 1 subfamily. As to quaternary structure, homodimer. Requires Mg(2+) as cofactor. The cofactor is Mn(2+).

It localises to the cytoplasm. The catalysed reaction is (2R,3S)-3-isopropylmalate + NAD(+) = 4-methyl-2-oxopentanoate + CO2 + NADH. Its pathway is amino-acid biosynthesis; L-leucine biosynthesis; L-leucine from 3-methyl-2-oxobutanoate: step 3/4. Its function is as follows. Catalyzes the oxidation of 3-carboxy-2-hydroxy-4-methylpentanoate (3-isopropylmalate) to 3-carboxy-4-methyl-2-oxopentanoate. The product decarboxylates to 4-methyl-2 oxopentanoate. The protein is 3-isopropylmalate dehydrogenase of Wolinella succinogenes (strain ATCC 29543 / DSM 1740 / CCUG 13145 / JCM 31913 / LMG 7466 / NCTC 11488 / FDC 602W) (Vibrio succinogenes).